The primary structure comprises 404 residues: Protein translocase subunit SecF (404 aa).

6 helical membrane-spanning segments follow: residues 15-35, 225-245, 246-266, 275-295, 327-347, and 355-375; these read KWYF…SMGA, LLAT…RFEL, IYGI…VGAF, LTVV…TIVV, ILTS…GGEV, and LVIG…PMLV.

Belongs to the SecD/SecF family. SecF subfamily. As to quaternary structure, forms a complex with SecD. Part of the essential Sec protein translocation apparatus which comprises SecA, SecYEG and auxiliary proteins SecDF. Other proteins may also be involved.

The protein resides in the cell inner membrane. Its function is as follows. Part of the Sec protein translocase complex. Interacts with the SecYEG preprotein conducting channel. SecDF uses the proton motive force (PMF) to complete protein translocation after the ATP-dependent function of SecA. The polypeptide is Protein translocase subunit SecF (Koribacter versatilis (strain Ellin345)).